A 502-amino-acid polypeptide reads, in one-letter code: UDP-N-acetylmuramate--L-alanine ligase (502 aa).

ATP is bound at residue 119-125 (GSHGKST).

The protein belongs to the MurCDEF family.

It localises to the cytoplasm. The catalysed reaction is UDP-N-acetyl-alpha-D-muramate + L-alanine + ATP = UDP-N-acetyl-alpha-D-muramoyl-L-alanine + ADP + phosphate + H(+). It functions in the pathway cell wall biogenesis; peptidoglycan biosynthesis. Its function is as follows. Cell wall formation. The chain is UDP-N-acetylmuramate--L-alanine ligase from Frankia casuarinae (strain DSM 45818 / CECT 9043 / HFP020203 / CcI3).